The chain runs to 187 residues: Ribulose bisphosphate carboxylase small subunit, chloroplastic (187 aa).

The transit peptide at 1–56 directs the protein to the chloroplast; it reads MASSVMSTATVATGANAAQASMIASFNGLKSAASFPVTRKQDLDITSIASNGGRVE.

The protein belongs to the RuBisCO small chain family. In terms of assembly, heterohexadecamer of 8 large and 8 small subunits.

The protein localises to the plastid. The protein resides in the chloroplast. Its function is as follows. RuBisCO catalyzes two reactions: the carboxylation of D-ribulose 1,5-bisphosphate, the primary event in carbon dioxide fixation, as well as the oxidative fragmentation of the pentose substrate. Both reactions occur simultaneously and in competition at the same active site. Although the small subunit is not catalytic it is essential for maximal activity. This is Ribulose bisphosphate carboxylase small subunit, chloroplastic from Capsicum annuum (Capsicum pepper).